Consider the following 31-residue polypeptide: Protamine-Z (31 aa).

The segment at 1–31 is disordered; it reads ARRRRSRRASRPVRRRRPRRVSRRRRARRRR.

In terms of tissue distribution, testis.

Its subcellular location is the nucleus. The protein localises to the chromosome. Protamines substitute for histones in the chromatin of sperm during the haploid phase of spermatogenesis. They compact sperm DNA into a highly condensed, stable and inactive complex. The chain is Protamine-Z from Clupea harengus (Atlantic herring).